We begin with the raw amino-acid sequence, 352 residues long: DNA-directed RNA polymerase subunit alpha (352 aa).

Positions 1–226 are alpha N-terminal domain (alpha-NTD); that stretch reads MLISQRPTLT…ELFGLARELN (226 aa). The segment at 243–352 is alpha C-terminal domain (alpha-CTD); sequence HIASFGLPIE…EQDYAETEQL (110 aa). A disordered region spans residues 324–352; the sequence is DASTGTWSDSGTFSDNDGGEQDYAETEQL. Positions 326-338 are enriched in polar residues; sequence STGTWSDSGTFSD. Acidic residues predominate over residues 340–352; it reads DGGEQDYAETEQL.

It belongs to the RNA polymerase alpha chain family. In terms of assembly, homodimer. The RNAP catalytic core consists of 2 alpha, 1 beta, 1 beta' and 1 omega subunit. When a sigma factor is associated with the core the holoenzyme is formed, which can initiate transcription.

The catalysed reaction is RNA(n) + a ribonucleoside 5'-triphosphate = RNA(n+1) + diphosphate. DNA-dependent RNA polymerase catalyzes the transcription of DNA into RNA using the four ribonucleoside triphosphates as substrates. In Nocardia farcinica (strain IFM 10152), this protein is DNA-directed RNA polymerase subunit alpha.